A 120-amino-acid polypeptide reads, in one-letter code: UPF0231 protein KPN78578_01240 (120 aa).

Belongs to the UPF0231 family.

The polypeptide is UPF0231 protein KPN78578_01240 (Klebsiella pneumoniae subsp. pneumoniae (strain ATCC 700721 / MGH 78578)).